The sequence spans 628 residues: tRNA uridine 5-carboxymethylaminomethyl modification enzyme MnmG (628 aa).

Residues 14-19, valine 126, and serine 181 each bind FAD; that span reads GAGHAG. 273–287 serves as a coordination point for NAD(+); sequence GPRYCPSIEDKVVRF. Residue glutamine 370 participates in FAD binding.

The protein belongs to the MnmG family. In terms of assembly, homodimer. Heterotetramer of two MnmE and two MnmG subunits. The cofactor is FAD.

The protein localises to the cytoplasm. NAD-binding protein involved in the addition of a carboxymethylaminomethyl (cmnm) group at the wobble position (U34) of certain tRNAs, forming tRNA-cmnm(5)s(2)U34. The protein is tRNA uridine 5-carboxymethylaminomethyl modification enzyme MnmG of Exiguobacterium sibiricum (strain DSM 17290 / CCUG 55495 / CIP 109462 / JCM 13490 / 255-15).